Here is a 387-residue protein sequence, read N- to C-terminus: 1-deoxy-D-xylulose 5-phosphate reductoisomerase (387 aa).

The NADPH site is built by threonine 10, glycine 11, isoleucine 13, asparagine 38, and asparagine 122. Lysine 123 lines the 1-deoxy-D-xylulose 5-phosphate pocket. Position 124 (glutamate 124) interacts with NADPH. Aspartate 148 contacts Mn(2+). Serine 149, glutamate 150, serine 174, and histidine 197 together coordinate 1-deoxy-D-xylulose 5-phosphate. Glutamate 150 serves as a coordination point for Mn(2+). An NADPH-binding site is contributed by glycine 203. Residues serine 210, asparagine 215, lysine 216, and glutamate 219 each contribute to the 1-deoxy-D-xylulose 5-phosphate site. Glutamate 219 serves as a coordination point for Mn(2+).

It belongs to the DXR family. Requires Mg(2+) as cofactor. The cofactor is Mn(2+).

The enzyme catalyses 2-C-methyl-D-erythritol 4-phosphate + NADP(+) = 1-deoxy-D-xylulose 5-phosphate + NADPH + H(+). The protein operates within isoprenoid biosynthesis; isopentenyl diphosphate biosynthesis via DXP pathway; isopentenyl diphosphate from 1-deoxy-D-xylulose 5-phosphate: step 1/6. Catalyzes the NADPH-dependent rearrangement and reduction of 1-deoxy-D-xylulose-5-phosphate (DXP) to 2-C-methyl-D-erythritol 4-phosphate (MEP). In Ehrlichia ruminantium (strain Welgevonden), this protein is 1-deoxy-D-xylulose 5-phosphate reductoisomerase.